A 162-amino-acid polypeptide reads, in one-letter code: Ribosome maturation factor RimP (162 aa).

Belongs to the RimP family.

Its subcellular location is the cytoplasm. Required for maturation of 30S ribosomal subunits. In Ralstonia pickettii (strain 12J), this protein is Ribosome maturation factor RimP.